The primary structure comprises 207 residues: Ras-related protein Rab-7a (207 aa).

N-acetylthreonine is present on Thr-2. GTP contacts are provided by Ser-17, Gly-18, Val-19, Gly-20, Lys-21, Thr-22, Ser-23, Ser-34, Asn-35, Tyr-37, and Thr-40. Mg(2+) is bound at residue Thr-22. The Switch 1 motif lies at 28 to 41 (YVNKKFSNQYKATI). Residues Thr-40 and Asp-63 each coordinate Mg(2+). Residue Gly-66 participates in GTP binding. A Switch 2 motif is present at residues 67 to 82 (QERFQSLGVAFYRGAD). Position 72 is a phosphoserine (Ser-72). 5 residues coordinate GTP: Asn-125, Lys-126, Asp-128, Ala-156, and Lys-157. Glycyl lysine isopeptide (Lys-Gly) (interchain with G-Cter in ubiquitin) cross-links involve residues Lys-191 and Lys-194. 2 S-geranylgeranyl cysteine lipidation sites follow: Cys-205 and Cys-207. Cys-207 bears the Cysteine methyl ester mark.

The protein belongs to the small GTPase superfamily. Rab family. In terms of assembly, interacts with NTRK1/TRKA. Interacts with RILP. Interacts with PSMA7. Interacts with RNF115. Interacts with and FYCO1. Interacts with the PIK3C3/VPS34-PIK3R4 complex. The GTP-bound form interacts with OSBPL1A. The GTP-bound form interacts with RAC1. Interacts with CLN3. Interacts with CHM, the substrate-binding subunit of the Rab geranylgeranyltransferase complex. Interacts with C9orf72. Does not interact with HPS4 and the BLOC-3 complex (heterodimer of HPS1 and HPS4). Interacts with CLN5. Interacts with PLEKHM1 (via N- and C-terminus). Interacts with PRPH; the interaction is direct. Interacts with VPS13A. The GDP-bound form interacts with RIMOC1. Interacts with the MON1A-CCZ1B complex and this interaction is enhanced in the presence of RIMOC1. Interacts with VPS39 and VPS41. Forms a ternary complex with LAMP2 and RUFY4; the interaction with LAMP2 is mediated by RUFY4 (via RUN and coiled coil domains). Requires Mg(2+) as cofactor. Deubiquitination at Lys-191 and Lys-194 by USP32. In terms of processing, phosphorylated at Ser-72 by LRRK1; phosphorylation is dependent on protein kinase C (PKC) activation of LRRK1. Post-translationally, prenylated. Prenylation is required for association with cellular membranes. Expressed in osteoclasts and in neurons.

The protein resides in the cytoplasmic vesicle. It is found in the phagosome membrane. Its subcellular location is the late endosome membrane. The protein localises to the lysosome membrane. It localises to the melanosome membrane. The protein resides in the autophagosome membrane. It is found in the lipid droplet. Its subcellular location is the endosome membrane. The protein localises to the mitochondrion membrane. It carries out the reaction GTP + H2O = GDP + phosphate + H(+). Its activity is regulated as follows. Regulated by guanine nucleotide exchange factors (GEFs) which promote the exchange of bound GDP for free GTP. Regulated by GTPase activating proteins (GAPs) which increase the GTP hydrolysis activity. Inhibited by GDP dissociation inhibitors (GDIs). The small GTPases Rab are key regulators of intracellular membrane trafficking, from the formation of transport vesicles to their fusion with membranes. Rabs cycle between an inactive GDP-bound form and an active GTP-bound form that is able to recruit to membranes different sets of downstream effectors directly responsible for vesicle formation, movement, tethering and fusion. In its active state, RAB7A binds to a variety of effector proteins playing a key role in the regulation of endo-lysosomal trafficking. Governs early-to-late endosomal maturation, microtubule minus-end as well as plus-end directed endosomal migration and positioning, and endosome-lysosome transport through different protein-protein interaction cascades. Also plays a central role in growth-factor-mediated cell signaling, nutrient-transporter-mediated nutrient uptake, neurotrophin transport in the axons of neurons and lipid metabolism. Also involved in regulation of some specialized endosomal membrane trafficking, such as maturation of melanosomes, pathogen-induced phagosomes (or vacuoles) and autophagosomes. Plays a role in the maturation and acidification of phagosomes that engulf pathogens, such as S.aureus and Mycobacteria. Plays a role in the fusion of phagosomes with lysosomes. In concert with RAC1, plays a role in regulating the formation of RBs (ruffled borders) in osteoclasts. Controls the endosomal trafficking and neurite outgrowth signaling of NTRK1/TRKA. Regulates the endocytic trafficking of the EGF-EGFR complex by regulating its lysosomal degradation. Involved in the ADRB2-stimulated lipolysis through lipophagy, a cytosolic lipase-independent autophagic pathway. Required for the exosomal release of SDCBP, CD63 and syndecan. Required for vesicular trafficking and cell surface expression of ACE2. May play a role in PRPH neuronal intermediate filament assembly. This Rattus norvegicus (Rat) protein is Ras-related protein Rab-7a.